The following is a 528-amino-acid chain: Homoserine O-acetyltransferase (528 aa).

Residues Leu60–Asp245 form the AB hydrolase-1 domain. Ser154 functions as the Nucleophile in the catalytic mechanism. Disordered regions lie at residues Arg250–Gln335 and Asp388–Glu413. Over residues Gln273–Ser282 the composition is skewed to polar residues. A compositionally biased stretch (basic and acidic residues) spans Ala295–Arg304. Positions Leu389 to Pro409 are enriched in low complexity. Residues Asp438 and His467 contribute to the active site.

Belongs to the AB hydrolase superfamily. MetX family.

Its subcellular location is the cytoplasm. It catalyses the reaction L-homoserine + acetyl-CoA = O-acetyl-L-homoserine + CoA. Its pathway is amino-acid biosynthesis; L-methionine biosynthesis via de novo pathway; O-acetyl-L-homoserine from L-homoserine: step 1/1. Its activity is regulated as follows. Inhibited by 6-carbamoyl-3a,4,5,9b-tetrahydro-3H-cyclopenta[ c]quinoline-4-carboxylic acid (CTCQC). Its function is as follows. Commits homoserine to the methionine biosynthesis pathway by catalyzing its O-acetylation. The sequence is that of Homoserine O-acetyltransferase from Cryptococcus neoformans var. grubii serotype A (strain H99 / ATCC 208821 / CBS 10515 / FGSC 9487) (Filobasidiella neoformans var. grubii).